Here is a 382-residue protein sequence, read N- to C-terminus: Homoserine O-succinyltransferase (382 aa).

One can recognise an AB hydrolase-1 domain in the interval 51–359; that stretch reads NAVLICHALS…DAPWGHDAFL (309 aa). Ser-157 serves as the catalytic Nucleophile. Arg-227 lines the substrate pocket. Catalysis depends on residues Asp-322 and His-355. Substrate is bound at residue Asp-356.

It belongs to the AB hydrolase superfamily. MetX family. Homodimer.

It localises to the cytoplasm. The catalysed reaction is L-homoserine + succinyl-CoA = O-succinyl-L-homoserine + CoA. Its pathway is amino-acid biosynthesis; L-methionine biosynthesis via de novo pathway; O-succinyl-L-homoserine from L-homoserine: step 1/1. Functionally, transfers a succinyl group from succinyl-CoA to L-homoserine, forming succinyl-L-homoserine. The sequence is that of Homoserine O-succinyltransferase from Marinobacter nauticus (strain ATCC 700491 / DSM 11845 / VT8) (Marinobacter aquaeolei).